The following is a 499-amino-acid chain: Putative protein phosphatase 2C 76 (499 aa).

An N-terminal signal peptide occupies residues 1 to 34 (MRLGCSGRRRRLLRAALLRLVVLVLVAPPRRCAG). Positions 67–101 (AGSGGEGDGDRRSSSSSPPPPPHPRGCHVAVDRGR) are disordered. Positions 92 to 457 (GCHVAVDRGR…DNVAAVIVPL (366 aa)) constitute a PPM-type phosphatase domain. 2 residues coordinate Mn(2+): aspartate 138 and glycine 139. The interval 286 to 306 (KKTSVVSGKRRRKRNSNNRDD) is disordered. Mn(2+)-binding residues include aspartate 397 and aspartate 448.

This sequence belongs to the PP2C family. It depends on Mg(2+) as a cofactor. Requires Mn(2+) as cofactor.

It catalyses the reaction O-phospho-L-seryl-[protein] + H2O = L-seryl-[protein] + phosphate. The catalysed reaction is O-phospho-L-threonyl-[protein] + H2O = L-threonyl-[protein] + phosphate. The chain is Putative protein phosphatase 2C 76 from Oryza sativa subsp. japonica (Rice).